We begin with the raw amino-acid sequence, 187 residues long: Oligoribonuclease (187 aa).

Positions 7 to 170 (LCWLDMEMTG…DDILESIEEM (164 aa)) constitute an Exonuclease domain. Tyrosine 128 is an active-site residue.

This sequence belongs to the oligoribonuclease family.

It localises to the cytoplasm. 3'-to-5' exoribonuclease specific for small oligoribonucleotides. This Neisseria meningitidis serogroup B (strain ATCC BAA-335 / MC58) protein is Oligoribonuclease.